The following is a 250-amino-acid chain: Large ribosomal subunit protein uL29m (250 aa).

Lys144 is subject to N6-acetyllysine.

It belongs to the universal ribosomal protein uL29 family. In terms of assembly, component of the mitochondrial large ribosomal subunit (mt-LSU). Mature mammalian 55S mitochondrial ribosomes consist of a small (28S) and a large (39S) subunit. The 28S small subunit contains a 12S ribosomal RNA (12S mt-rRNA) and 30 different proteins. The 39S large subunit contains a 16S rRNA (16S mt-rRNA), a copy of mitochondrial valine transfer RNA (mt-tRNA(Val)), which plays an integral structural role, and 52 different proteins.

It is found in the mitochondrion. The sequence is that of Large ribosomal subunit protein uL29m (MRPL47) from Homo sapiens (Human).